Consider the following 79-residue polypeptide: Conotoxin Tr6.3 (79 aa).

The signal sequence occupies residues 1-22 (MKLTCVLIISVLFLTASQLITA). Residues 23–47 (VYSRDKQQYRAARLRDEMRNLKGAR) constitute a propeptide that is removed on maturation. 3 disulfide bridges follow: Cys49-Cys62, Cys56-Cys67, and Cys61-Cys77. Pro60 and Pro63 each carry 4-hydroxyproline.

This sequence belongs to the conotoxin O1 superfamily. In terms of tissue distribution, expressed by the venom duct.

The protein localises to the secreted. In terms of biological role, ion channel inhibitor that inhibits the increase in intracellular calcium upon depolarization in DRG neurons. In vivo, both intraperitoneal and intracranial injections into mice induce hyperactivity. This chain is Conotoxin Tr6.3, found in Conus terebra (Sea snail).